The sequence spans 349 residues: Flap endonuclease 1 (349 aa).

Positions 1–98 are N-domain; sequence MDLGEIVEDV…EEIERRKRAK (98 aa). Mg(2+) is bound by residues D27, D80, E152, E154, D173, D175, and D236. The tract at residues 116 to 258 is I-domain; the sequence is EIRKYAQAAV…TALRIIKKYN (143 aa). An interaction with PCNA region spans residues 341–349; the sequence is KQTGLDQWF.

This sequence belongs to the XPG/RAD2 endonuclease family. FEN1 subfamily. As to quaternary structure, interacts with PCNA. PCNA stimulates the nuclease activity without altering cleavage specificity. The cofactor is Mg(2+).

Its function is as follows. Structure-specific nuclease with 5'-flap endonuclease and 5'-3' exonuclease activities involved in DNA replication and repair. During DNA replication, cleaves the 5'-overhanging flap structure that is generated by displacement synthesis when DNA polymerase encounters the 5'-end of a downstream Okazaki fragment. Binds the unpaired 3'-DNA end and kinks the DNA to facilitate 5' cleavage specificity. Cleaves one nucleotide into the double-stranded DNA from the junction in flap DNA, leaving a nick for ligation. Also involved in the base excision repair (BER) pathway. Acts as a genome stabilization factor that prevents flaps from equilibrating into structures that lead to duplications and deletions. Also possesses 5'-3' exonuclease activity on nicked or gapped double-stranded DNA. In Sulfolobus acidocaldarius (strain ATCC 33909 / DSM 639 / JCM 8929 / NBRC 15157 / NCIMB 11770), this protein is Flap endonuclease 1.